Reading from the N-terminus, the 353-residue chain is MTEPLKPRIDFDGPLDVDQNPKFRAQQTFDENQAQNFAPATLDEAPEEEGQVEAVMDAALRPKRSLWRKMVMGGLALFGASVVGQGVQWTMNAWQTQDWVALGGCAAGALIIGAGVGSVVTEWRRLWRLRQRAHERDEARDLLHSHGTGKGRAFCEKLAQQAGIDQSHPALQRWYASIHETQNDREVVSLYAHLVQPVLDAQARREISRSAAESTLMIAVSPLALVDMAFIAWRNLRLINRIATLYGIELGYYSRLRLFKLVLLNIAFAGASELVREVGMDWMSQDLAARLSTRAAQGIGAGLLTARLGIKAMELCRPLPWIDDDKPRLGDFRRQLIGQVKETLQKGKTPSEK.

3 helical membrane-spanning segments follow: residues 70 to 90 (MVMG…VQWT), 100 to 120 (VALG…GSVV), and 213 to 233 (ESTL…FIAW).

Belongs to the UPF0283 family.

The protein resides in the cell inner membrane. The chain is UPF0283 membrane protein YcjF from Escherichia coli O127:H6 (strain E2348/69 / EPEC).